Consider the following 208-residue polypeptide: Nitrate/nitrite response regulator protein homolog (208 aa).

One can recognise a Response regulatory domain in the interval 6–122 (KVLLIDDHPL…TLLEQIKRIA (117 aa)). Asp57 bears the 4-aspartylphosphate mark. The 66-residue stretch at 142-207 (EDNPLDSLTD…AATVLFFEQN (66 aa)) folds into the HTH luxR-type domain. Residues 166–185 (NKQIAAQLFISEETVKVHIR) constitute a DNA-binding region (H-T-H motif).

Its function is as follows. Could activate the expression of a formate dehydrogenase operon and could repress the transcription of the fumarate reductase (frdABCD) operon. This chain is Nitrate/nitrite response regulator protein homolog (narP), found in Haemophilus influenzae (strain ATCC 51907 / DSM 11121 / KW20 / Rd).